Reading from the N-terminus, the 460-residue chain is Armadillo repeat-containing protein LFR (460 aa).

The disordered stretch occupies residues Met1 to Thr30. The span at Lys8 to Ser17 shows a compositional bias: gly residues. ARM repeat units lie at residues Asp227 to His269, Asn323 to Glu362, and Asp366 to Ser407.

Interacts with AS2. In terms of tissue distribution, expressed in roots, leaves, stems and flowers.

It is found in the nucleus. In terms of biological role, involved in leaf and flower development. Plays roles in leaf development partly by associating with AS2 and repressing KNAT1/BP transcription. Required for the formation of anther cell layers and normal expression of genes that regulates anther development. This Arabidopsis thaliana (Mouse-ear cress) protein is Armadillo repeat-containing protein LFR.